We begin with the raw amino-acid sequence, 416 residues long: Counting factor 60 (416 aa).

A signal peptide spans 1-22 (MIKKSALITLFLVSLILGVSLS). Residues Asn110, Asn218, Asn231, Asn318, and Asn411 are each glycosylated (N-linked (GlcNAc...) asparagine).

It belongs to the histidine acid phosphatase family. In terms of assembly, component of the counting factor (CF) complex, which includes cf60, cf50, cf45-1 and ctnA.

Its subcellular location is the secreted. Cell-counting factor that limits the maximum size of the multicellular structure. Does not possess acid phosphatase activity. Cells with decreased levels of this protein form large groups while cells overexpressing this protein form small groups. This is Counting factor 60 (cf60) from Dictyostelium discoideum (Social amoeba).